Here is a 166-residue protein sequence, read N- to C-terminus: Cilia- and flagella-associated protein 68 (166 aa).

2 mn regions span residues 98–109 (TTYDANYSRKKP) and 139–149 (KSTYMTNYSEP).

It belongs to the CFAP68 family. Microtubule inner protein component of sperm flagellar doublet microtubules.

Its subcellular location is the cytoplasm. It is found in the cytoskeleton. It localises to the cilium axoneme. The protein localises to the flagellum axoneme. The protein resides in the nucleus. Its subcellular location is the cell projection. It is found in the cilium. Its function is as follows. Microtubule inner protein (MIP) part of the dynein-decorated doublet microtubules (DMTs) in cilia axoneme, which is required for motile cilia beating. This is Cilia- and flagella-associated protein 68 (Cfap68) from Mus musculus (Mouse).